The primary structure comprises 789 residues: Leucine-rich repeat and fibronectin type-III domain-containing protein 2 (789 aa).

An N-terminal signal peptide occupies residues 1–20; it reads METLLGGLLAFGMAFAVVDA. In terms of domain architecture, LRRNT spans 21 to 52; sequence CPKYCVCQNLSESLGTLCPSKGLLFVPPDIDR. Topologically, residues 21–534 are extracellular; sequence CPKYCVCQNL…MHSQILGGTM (514 aa). N-linked (GlcNAc...) asparagine glycosylation is present at Asn29. 7 LRR repeats span residues 53 to 74, 77 to 98, 101 to 122, 125 to 146, 150 to 171, 174 to 195, and 198 to 219; these read RTVE…DFAN, GLVD…SFLD, SLRS…TLRG, NLQH…AFED, TLED…SVRR, NLHQ…TFAD, and KLAR…PIFA. The LRRCT domain maps to 242–288; it reads NPLHCNCELLWLRRLERDDDLETCGSPGGLKGRYFWHVREEEFVCEP. In terms of domain architecture, Ig-like spans 289–375; sequence PLITQHTHKL…GEATAMVEVS (87 aa). Cys310 and Cys359 are joined by a disulfide. N-linked (GlcNAc...) asparagine glycans are attached at residues Asn332, Asn341, and Asn384. The tract at residues 383–424 is disordered; the sequence is SNSTSRTAPPKSRLSDITGSSKTSRGGGGSGGGEPPKSPPER. Positions 407-416 are enriched in gly residues; it reads RGGGGSGGGE. Residues 421–518 form the Fibronectin type-III domain; that stretch reads PPERAVLVSE…GCAQFFTKAD (98 aa). Residues 535 to 555 traverse the membrane as a helical segment; sequence ILVIGGIIVATLLVFIVILMV. Residues 556–789 lie on the Cytoplasmic side of the membrane; that stretch reads RYKVCNHEAP…SSEWVMESTV (234 aa). Disordered stretches follow at residues 577 to 602, 619 to 654, and 668 to 702; these read SQTN…PPKV, SDSS…PSLD, and QRKE…LGPP. A compositionally biased stretch (pro residues) spans 583-599; sequence QPPPPSSAPAGAPPQGP. Positions 619-638 are enriched in low complexity; the sequence is SDSSSSSSLGSGEAAGLGRA. The span at 641–650 shows a compositional bias: pro residues; that stretch reads RIPPSAPRPK. The PDZ-binding motif lies at 786–789; that stretch reads ESTV.

This sequence belongs to the LRFN family. As to quaternary structure, forms heteromeric complexes with LRFN1, LRFN3, LRFN4 and LRFN5. Can form homomeric complexes, but not across cell junctions. Directly interacts with 2 NMDA receptor subunits GRIN1 and GRIN2A. Interacts with DLG1, DLG2, DLG3 and DLG4. Post-translationally, glycosylated.

The protein localises to the membrane. The protein resides in the synapse. It localises to the postsynaptic cell membrane. Functionally, promotes neurite outgrowth in hippocampal neurons. Enhances the cell surface expression of 2 NMDA receptor subunits GRIN1 and GRIN2A. May play a role in redistributing DLG4 to the cell periphery. The chain is Leucine-rich repeat and fibronectin type-III domain-containing protein 2 (LRFN2) from Homo sapiens (Human).